Consider the following 98-residue polypeptide: Large ribosomal subunit protein bL28 (98 aa).

The protein belongs to the bacterial ribosomal protein bL28 family.

The polypeptide is Large ribosomal subunit protein bL28 (Chelativorans sp. (strain BNC1)).